A 1021-amino-acid chain; its full sequence is PDZ domain-containing protein 7 (1021 aa).

PDZ domains lie at 86–156 (AVRV…LTSS) and 210–279 (IVHL…EVLK). The span at 324–344 (SSSSVSSYASSAPCSSGSLPS) shows a compositional bias: low complexity. Disordered regions lie at residues 324–345 (SSSS…LPSD), 431–495 (ITRS…DSRS), and 724–814 (RRGA…HRPR). The segment covering 729 to 744 (APPPQPPPVAPRPPRP) has biased composition (pro residues). The span at 758 to 767 (QQNQSQTPAQ) shows a compositional bias: polar residues. Residues 772–794 (SRSRSRSRSHSRGQGKSPGRRRS) are compositionally biased toward basic residues. A compositionally biased stretch (low complexity) spans 799-808 (PIATAATANG). A PDZ 3 domain is found at 858–930 (TITLSKMKQS…QRAVDTIRRA (73 aa)). The interval 992 to 1021 (QLQQSLSSALKVPQSIPKLSPILKDPHDPS) is disordered.

Homodimerizes (via PDZ2 domain). Component of USH2 complex, composed of ADGRV1, PDZD7, USH2A and WHRN. Interacts (via PDZ domains) with WHRN; the interaction is direct. Interacts with USH1G. Interacts with ADGRV1 (via the cytoplasmic region). Interacts with USH2A (via the cytoplasmic region). Interacts with MYO7A (via MyTH4-FERM domains). Isoform 1 is expressed in developing and adult cochlea but not retina. Isoform 2 is expressed in developing and adult cochlea and retina. Isoform 3 is expressed in adult cochlea and retina. Isoform 4 is expressed in retina and developing cochlea but not adult cochlea. Isoform 5 is expressed in adult cochlea but not in developing cochlea or retina.

Its subcellular location is the cell projection. It is found in the cilium. The protein localises to the nucleus. It localises to the stereocilium. Its function is as follows. In cochlear developing hair cells, essential in organizing the USH2 complex at stereocilia ankle links. Blocks inhibition of adenylate cyclase activity mediated by ADGRV1. The sequence is that of PDZ domain-containing protein 7 from Mus musculus (Mouse).